A 911-amino-acid chain; its full sequence is Probable 2-oxoadipate dehydrogenase complex component E1 homolog (911 aa).

Belongs to the alpha-ketoglutarate dehydrogenase family. Thiamine diphosphate is required as a cofactor.

Its subcellular location is the mitochondrion. It catalyses the reaction N(6)-[(R)-lipoyl]-L-lysyl-[protein] + 2-oxoadipate + H(+) = N(6)-[(R)-S(8)-glutaryldihydrolipoyl]-L-lysyl-[protein] + CO2. Its function is as follows. 2-oxoadipate dehydrogenase (E1a) component of the 2-oxoadipate dehydrogenase complex (OADHC). Participates in the first step, rate limiting for the overall conversion of 2-oxoadipate (alpha-ketoadipate) to glutaryl-CoA and CO(2) catalyzed by the whole OADHC. Catalyzes the irreversible decarboxylation of 2-oxoadipate via the thiamine diphosphate (ThDP) cofactor and subsequent transfer of the decarboxylated acyl intermediate on an oxidized dihydrolipoyl group that is covalently amidated to the E2 enzyme (dihydrolipoyllysine-residue succinyltransferase or DLST). This Caenorhabditis elegans protein is Probable 2-oxoadipate dehydrogenase complex component E1 homolog.